A 153-amino-acid polypeptide reads, in one-letter code: Transcriptional repressor NrdR (153 aa).

The segment at 3 to 34 (CPFCNHLHDKVVDSRESKEGDAIRRRRECLEC) is a zinc-finger region. In terms of domain architecture, ATP-cone spans 49-139 (YMVVKKDGRR…VYRDFQDEQA (91 aa)).

It belongs to the NrdR family. It depends on Zn(2+) as a cofactor.

Negatively regulates transcription of bacterial ribonucleotide reductase nrd genes and operons by binding to NrdR-boxes. The chain is Transcriptional repressor NrdR from Solibacter usitatus (strain Ellin6076).